The primary structure comprises 292 residues: G1/S-specific cyclin-D3 (292 aa).

The region spanning 27–152 is the Cyclin N-terminal domain; it reads VLQSLLRLEE…LVLGKLKWDL (126 aa). The segment at 255–292 is disordered; the sequence is LREAAQTSPSPAPKAPRGSSSQGPSQTSTPTDVTAIHL. Phosphoserine occurs at positions 264 and 279. A compositionally biased stretch (low complexity) spans 272 to 285; it reads GSSSQGPSQTSTPT. Thr283 bears the Phosphothreonine mark.

It belongs to the cyclin family. Cyclin D subfamily. As to quaternary structure, interacts with the CDK4 and CDK6 protein kinases to form a serine/threonine kinase holoenzyme complex. The cyclin subunit imparts substrate specificity to the complex. Interacts with ATF5. Interacts with EIF3K. Component of the ternary complex cyclin D/CDK4/CDKN1B required for nuclear translocation and modulation of CDK4-mediated kinase activity. Can form similar complexes with either CDKN1A or CDKN2A. Phosphorylation at Thr-283 by MAP kinases is required for ubiquitination and degradation by the DCX(AMBRA1) complex. In terms of processing, ubiquitinated by the DCX(AMBRA1) complex during the transition from G1 to S cell phase, leading to its degradation: ubiquitination is dependent on Thr-283 phosphorylation. The DCX(AMBRA1) complex represents the major regulator of CCND3 stability during the G1/S transition. Polyubiquitinated by the SCF(FBXL2) complex, leading to proteasomal degradation.

It localises to the nucleus. It is found in the cytoplasm. Functionally, regulatory component of the cyclin D3-CDK4 (DC) complex that phosphorylates and inhibits members of the retinoblastoma (RB) protein family including RB1 and regulates the cell-cycle during G(1)/S transition. Phosphorylation of RB1 allows dissociation of the transcription factor E2F from the RB/E2F complex and the subsequent transcription of E2F target genes which are responsible for the progression through the G(1) phase. Hypophosphorylates RB1 in early G(1) phase. Cyclin D-CDK4 complexes are major integrators of various mitogenenic and antimitogenic signals. Component of the ternary complex, cyclin D3/CDK4/CDKN1B, required for nuclear translocation and activity of the cyclin D-CDK4 complex. Shows transcriptional coactivator activity with ATF5 independently of CDK4. In Bos taurus (Bovine), this protein is G1/S-specific cyclin-D3 (CCND3).